Consider the following 770-residue polypeptide: Disabled homolog 2 (770 aa).

The segment covering 1 to 16 (MSNEVETSATNGQPDQ) has biased composition (polar residues). The tract at residues 1-38 (MSNEVETSATNGQPDQQAAPKAPSKKEKKKGPEKTDEY) is disordered. Serine 2 is modified (N-acetylserine). A Phosphoserine modification is found at serine 2. A PID domain is found at 45 to 196 (GDGVKYKAKL…KAVENGSEAL (152 aa)). A Phosphotyrosine modification is found at tyrosine 170. Phosphoserine is present on serine 193. The interval 230-447 (ESKDILLVDL…KPGRGRRTAK (218 aa)) is required for localization to clathrin-coated pits. Disordered regions lie at residues 284 to 482 (LNFF…LQPN) and 604 to 629 (VSTQ…AGPP). Short sequence motifs (DPF) lie at residues 293 to 295 (DPF) and 298 to 300 (DPF). Polar residues predominate over residues 302–313 (QPDQSTPSSFDS). 2 positions are modified to phosphoserine; in mitosis: serine 326 and serine 328. Residues 366–396 (FSSSQTQPAVRTQNGVSEREQNGFSVKSSPN) are compositionally biased toward polar residues. A Phosphoserine modification is found at serine 401. 3 stretches are compositionally biased toward polar residues: residues 407 to 425 (SIQN…SSPH), 466 to 480 (PSGQ…TALQ), and 604 to 616 (VSTQ…SSLL). A sufficient for interaction with GRB2 region spans residues 604–732 (VSTQPPSMHS…SLPVTKSTDN (129 aa)). The segment at 619–627 (PPQPPPRAG) is required for interaction with CSK. The interval 649-770 (KDVKEMFKDF…YRDPFGNPFA (122 aa)) is required for interaction with MYO6. A required for interaction with GRB2 and CSK region spans residues 663-671 (PPAVPARKG). Phosphoserine is present on residues serine 675, serine 723, and serine 729. Residues 709 to 725 (NKINEPPKPAPRQVSLP) are sufficient for interaction with SH3KBP1 SH3 domain. A disordered region spans residues 742 to 770 (SFGSSQASVASSQPVSSEMYRDPFGNPFA). Residues 745-758 (SSQASVASSQPVSS) show a composition bias toward low complexity.

In terms of assembly, interacts (via NPXY motif) with DAB2 (via PID domain). Can interact (via PID domain) with LDLR, APP, APLP1 and APLP2, and weakly with INPP5D (via NPXY motifs); the interaction is impaired by tyrosine phosphorylation of the respective NPXY motifs. Can weakly interact (via PID domain) with LRP1 (via NPXY motif); the interaction is enhanced by tyrosine phosphorylation of the NPXY motif. Interacts with LRP2 (via NPXY motif); the interaction is not affected by tyrosine phosphorylation of the NPXY motif. Interacts with clathrin; in vitro can assemble clathrin triskelia into polyhedral coats. Interacts with AP2A2, ITGB1, ITGB3, ITGB5, PIAS2, DAB2IP, NOSTRIN, FCHO1, DVL3, EPS15, ITSN1 and EPS15L1. Interacts with SH3KBP1 (via SH3 domains). Interacts with GRB2; competes with SOS1 for binding to GRB2 and the interaction is enhanced by EGF and NT-3 stimulation. Interacts with MAP3K7; the interaction is induced by TGF-beta stimulation and may mediate TGF-beta stimulated JNK activation. Interacts with AXIN1 and PPP1CA; the interactions are mutually exclusive. Interacts with the globular tail of MYO6. Interacts (via DPF motifs) with FCHO2; the interaction is direct and required for DAB2-mediated LDLR endocytosis. Interacts with LRP6; the interaction involves LRP6 phosphorylation by CK2 and sequesters LRP6 towards clathrin-mediated endocytosis. Associates with the TGF-beta receptor complex. Interacts with SMAD2 and SMAD3; the interactions are enhanced upon TGF-beta stimulation. Interacts with GRB2; the interaction is enhanced by EGF and NT-3 stimulation. Interacts with SRC; the interaction is enhanced by EGF stimulation. Phosphorylated. Phosphorylation during mitosis is leading to membrane displacement. Expressed in deep invaginations, inclusion cysts and the surface epithelial cells of the ovary. Also expressed in breast epithelial cells, spleen, thymus, prostate, testis, macrophages, fibroblasts, lung epithelial cells, placenta, brain stem, heart and small intestine. Expressed in kidney proximal tubular epithelial cells (at protein level).

The protein resides in the cytoplasm. It localises to the cytoplasmic vesicle. Its subcellular location is the clathrin-coated vesicle membrane. It is found in the membrane. The protein localises to the clathrin-coated pit. Functionally, adapter protein that functions as a clathrin-associated sorting protein (CLASP) required for clathrin-mediated endocytosis of selected cargo proteins. Can bind and assemble clathrin, and binds simultaneously to phosphatidylinositol 4,5-bisphosphate (PtdIns(4,5)P2) and cargos containing non-phosphorylated NPXY internalization motifs, such as the LDL receptor, to recruit them to clathrin-coated pits. Can function in clathrin-mediated endocytosis independently of the AP-2 complex. Involved in endocytosis of integrin beta-1; this function seems to redundant with the AP-2 complex and seems to require DAB2 binding to endocytosis accessory EH domain-containing proteins such as EPS15, EPS15L1 and ITSN1. Involved in endocytosis of cystic fibrosis transmembrane conductance regulator/CFTR. Involved in endocytosis of megalin/LRP2 lipoprotein receptor during embryonal development. Required for recycling of the TGF-beta receptor. Involved in CFTR trafficking to the late endosome. Involved in several receptor-mediated signaling pathways. Involved in TGF-beta receptor signaling and facilitates phosphorylation of the signal transducer SMAD2. Mediates TFG-beta-stimulated JNK activation. May inhibit the canoniocal Wnt/beta-catenin signaling pathway by stabilizing the beta-catenin destruction complex through a competing association with axin preventing its dephosphorylation through protein phosphatase 1 (PP1). Sequesters LRP6 towards clathrin-mediated endocytosis, leading to inhibition of Wnt/beta-catenin signaling. May activate non-canonical Wnt signaling. In cell surface growth factor/Ras signaling pathways proposed to inhibit ERK activation by interrupting the binding of GRB2 to SOS1 and to inhibit SRC by preventing its activating phosphorylation at 'Tyr-419'. Proposed to be involved in modulation of androgen receptor (AR) signaling mediated by SRC activation; seems to compete with AR for interaction with SRC. Plays a role in the CSF-1 signal transduction pathway. Plays a role in cellular differentiation. Involved in cell positioning and formation of visceral endoderm (VE) during embryogenesis and proposed to be required in the VE to respond to Nodal signaling coming from the epiblast. Required for the epithelial to mesenchymal transition, a process necessary for proper embryonic development. May be involved in myeloid cell differentiation and can induce macrophage adhesion and spreading. May act as a tumor suppressor. The sequence is that of Disabled homolog 2 (DAB2) from Homo sapiens (Human).